The following is an 84-amino-acid chain: Three-finger toxin 3FTx-1 (84 aa).

A signal peptide spans 1 to 21 (MKTLLLTLVVVTIVCLDLGNS). 4 cysteine pairs are disulfide-bonded: Cys24–Cys41, Cys34–Cys59, Cys63–Cys71, and Cys72–Cys77. A glycan (N-linked (GlcNAc...) asparagine) is linked at Asn78.

It belongs to the three-finger toxin family. Short-chain subfamily. Expressed by the venom gland.

It is found in the secreted. The protein is Three-finger toxin 3FTx-1 of Micrurus corallinus (Brazilian coral snake).